The sequence spans 505 residues: Maturase K (505 aa).

Belongs to the intron maturase 2 family. MatK subfamily.

The protein localises to the plastid. It localises to the chloroplast. Functionally, usually encoded in the trnK tRNA gene intron. Probably assists in splicing its own and other chloroplast group II introns. This is Maturase K from Ficus carica (Common fig).